The primary structure comprises 111 residues: MLQAKKTEVAEALTKAEAGRMELELSVTKLRAEEASLQDSLSKLSALNESLAQDKLDLNCLVTQLEEEKAMLQGRQRQAEQEATVAPAEQEWLEELWLEQEVARQGLEGSL.

Residues 21 to 86 (MELELSVTKL…RQAEQEATVA (66 aa)) adopt a coiled-coil conformation.

It belongs to the rootletin family.

In Homo sapiens (Human), this protein is Putative ciliary rootlet coiled-coil protein-like 1 protein (CROCCP2).